A 209-amino-acid polypeptide reads, in one-letter code: Response regulator protein VraR (209 aa).

One can recognise a Response regulatory domain in the interval Lys-4 to Ser-120. The residue at position 55 (Asp-55) is a 4-aspartylphosphate. Positions Arg-141–Asn-206 constitute an HTH luxR-type domain. The segment at residues Asn-165–Ser-184 is a DNA-binding region (H-T-H motif).

In terms of assembly, homodimer. In terms of processing, phosphorylated by VraS. Phosphorylation state of VraR controls dimerization of the protein.

It localises to the cytoplasm. Its function is as follows. Member of the two-component regulatory system VraS/VraR involved in the control of the cell wall peptidoglycan biosynthesis. Upon cellular stress, the histidine kinase VraS transfers the phosphoryl group onto VraR. Upon phosphorylation, VraR dimerizes at the N-terminal domain. In turn, phosphorylation-induced dimerization expands and enhances the VraR binding to its own promoter leading to increased expression and subsequent modulation of as many as 40 genes, which ultimately constitute the S.aureus response to cell wall damage. In addition, inhibits the host autophagic flux and delays the early stage of autophagosome formation, thereby promoting bacterial survival. Facilitates the ability of S.aureus to resist host polymorphonuclear leukocytes-mediated phagocytosis and killing thus contributing to immune evasion. The chain is Response regulator protein VraR (vraR) from Staphylococcus aureus (strain Mu3 / ATCC 700698).